Here is a 489-residue protein sequence, read N- to C-terminus: Glycogen synthase (489 aa).

Arg20 is a binding site for ADP-alpha-D-glucose.

The protein belongs to the glycosyltransferase 1 family. Bacterial/plant glycogen synthase subfamily.

It carries out the reaction [(1-&gt;4)-alpha-D-glucosyl](n) + ADP-alpha-D-glucose = [(1-&gt;4)-alpha-D-glucosyl](n+1) + ADP + H(+). Its pathway is glycan biosynthesis; glycogen biosynthesis. Functionally, synthesizes alpha-1,4-glucan chains using ADP-glucose. This is Glycogen synthase from Chlorobium chlorochromatii (strain CaD3).